Here is a 481-residue protein sequence, read N- to C-terminus: Sphingosine kinase 2 (481 aa).

Residues 111–253 enclose the DAGKc domain; it reads GRPKRLLVFV…VDVATIAQGN (143 aa). Residues 121 to 123 and threonine 153 contribute to the ATP site; that span reads NPF. 178–181 contacts substrate; sequence SGDG. The active-site Proton donor/acceptor is aspartate 180. Residues glutamate 185 and 210 to 212 contribute to the ATP site; that span reads GTG. Substrate is bound at residue aspartate 271. ATP is bound by residues arginine 278, arginine 284, and 441–443; that span reads DGE.

The cofactor is Mg(2+). Highly expressed in flowers and siliques and at lower levels in roots, leaves and stems.

The protein localises to the vacuole membrane. It catalyses the reaction a sphingoid base + ATP = a sphingoid 1-phosphate + ADP + H(+). Activated by phosphatidic acid (PA). Binding with PA stimulates the activity by promoting the binding of substrate to the catalytic site. Involved in the production of sphingolipid metabolites. Phosphorylates sphingosine and various l sphingoid long-chain base (LCB) products, such as phytosphingosine (PHS, 4-hydroxysphinganine), 4-hydroxy-8-sphingenine, 4,8-sphingadienine and D-erythro-dihydrosphingosine, but has a very few activity toward D,L-threo- dihydrosphingosine. Is required for abscisic acid (ABA) signaling that mediates stomatal closure, inhibition of seed germination and root elongation. May function upstream of PLDALPHA1 and phosphatidic acid (PA) in an amplification response to ABA that mediates stomatal closure. The protein is Sphingosine kinase 2 (SPHK2) of Arabidopsis thaliana (Mouse-ear cress).